We begin with the raw amino-acid sequence, 222 residues long: MSAVINKEALLAKIEEALRRGKPRRFRQSVELILVLREVDLSKPENRINLLVELPHPPKPNKVAAFAHGAFEVQAKNAGVDAVISRDQVEGLSGNKRAIRKLAKQYDFFIAPPDLMPLLGRVVGPIFGPRGKMPEVAPPNVDVKSLVERLRRSVRVKLRNEPVIKVRIGAEGQKPEEVLENALAVLEDVNRKFSLRQYLKDVYIKKTMGPPVKAKALEVLAR.

The protein belongs to the universal ribosomal protein uL1 family. Part of the 50S ribosomal subunit.

Its function is as follows. Binds directly to 23S rRNA. Probably involved in E site tRNA release. Protein L1 is also a translational repressor protein, it controls the translation of its operon by binding to its mRNA. In Pyrobaculum neutrophilum (strain DSM 2338 / JCM 9278 / NBRC 100436 / V24Sta) (Thermoproteus neutrophilus), this protein is Large ribosomal subunit protein uL1.